A 98-amino-acid polypeptide reads, in one-letter code: uncharacterized protein (98 aa).

This sequence belongs to the HesB/IscA family.

This is an uncharacterized protein from Staphylococcus aureus (strain MRSA252).